The primary structure comprises 383 residues: NADH-quinone oxidoreductase subunit D 1 (383 aa).

The protein belongs to the complex I 49 kDa subunit family. As to quaternary structure, NDH-1 is composed of 14 different subunits. Subunits NuoB, C, D, E, F, and G constitute the peripheral sector of the complex.

It is found in the cell membrane. It carries out the reaction a quinone + NADH + 5 H(+)(in) = a quinol + NAD(+) + 4 H(+)(out). In terms of biological role, NDH-1 shuttles electrons from NADH, via FMN and iron-sulfur (Fe-S) centers, to quinones in the respiratory chain. The immediate electron acceptor for the enzyme in this species is believed to be a menaquinone. Couples the redox reaction to proton translocation (for every two electrons transferred, four hydrogen ions are translocated across the cytoplasmic membrane), and thus conserves the redox energy in a proton gradient. In Streptomyces coelicolor (strain ATCC BAA-471 / A3(2) / M145), this protein is NADH-quinone oxidoreductase subunit D 1.